Here is a 138-residue protein sequence, read N- to C-terminus: Ribonuclease VapC21 (138 aa).

In terms of domain architecture, PINc spans 6-128; that stretch reads LLDKSAAYRA…ERIAAITRQP (123 aa). Mg(2+) is bound by residues Asp8 and Asp97.

The protein belongs to the PINc/VapC protein family. Mg(2+) serves as cofactor.

In terms of biological role, toxic component of a type II toxin-antitoxin (TA) system. An RNase. Its toxic effect is neutralized by coexpression with cognate antitoxin VapB21. This chain is Ribonuclease VapC21, found in Mycobacterium tuberculosis (strain CDC 1551 / Oshkosh).